A 156-amino-acid chain; its full sequence is Small ribosomal subunit protein uS7 (156 aa).

This sequence belongs to the universal ribosomal protein uS7 family. As to quaternary structure, part of the 30S ribosomal subunit. Contacts proteins S9 and S11.

Its function is as follows. One of the primary rRNA binding proteins, it binds directly to 16S rRNA where it nucleates assembly of the head domain of the 30S subunit. Is located at the subunit interface close to the decoding center, probably blocks exit of the E-site tRNA. The sequence is that of Small ribosomal subunit protein uS7 from Streptococcus agalactiae serotype Ia (strain ATCC 27591 / A909 / CDC SS700).